The sequence spans 387 residues: 1-deoxy-D-xylulose 5-phosphate reductoisomerase (387 aa).

NADPH-binding residues include threonine 10, glycine 11, isoleucine 13, asparagine 38, and asparagine 122. Residue lysine 123 participates in 1-deoxy-D-xylulose 5-phosphate binding. Residue glutamate 124 participates in NADPH binding. Residue aspartate 148 participates in Mn(2+) binding. Serine 149, glutamate 150, serine 174, and histidine 197 together coordinate 1-deoxy-D-xylulose 5-phosphate. Glutamate 150 contacts Mn(2+). Glycine 203 is an NADPH binding site. 4 residues coordinate 1-deoxy-D-xylulose 5-phosphate: serine 210, asparagine 215, lysine 216, and glutamate 219. Glutamate 219 contributes to the Mn(2+) binding site.

Belongs to the DXR family. It depends on Mg(2+) as a cofactor. Mn(2+) is required as a cofactor.

It carries out the reaction 2-C-methyl-D-erythritol 4-phosphate + NADP(+) = 1-deoxy-D-xylulose 5-phosphate + NADPH + H(+). Its pathway is isoprenoid biosynthesis; isopentenyl diphosphate biosynthesis via DXP pathway; isopentenyl diphosphate from 1-deoxy-D-xylulose 5-phosphate: step 1/6. In terms of biological role, catalyzes the NADPH-dependent rearrangement and reduction of 1-deoxy-D-xylulose-5-phosphate (DXP) to 2-C-methyl-D-erythritol 4-phosphate (MEP). The sequence is that of 1-deoxy-D-xylulose 5-phosphate reductoisomerase from Ehrlichia ruminantium (strain Gardel).